We begin with the raw amino-acid sequence, 386 residues long: Patatin-10 (386 aa).

The first 23 residues, 1-23 (MATTKSFLILFFMILATTSSTCA), serve as a signal peptide directing secretion. The PNPLA domain occupies 32 to 229 (LSIDGGGIKG…TVGDPALLSL (198 aa)). The GXGXXG signature appears at 36–41 (GGGIKG). The short motif at 75–79 (GTSTG) is the GXSXG element. Catalysis depends on S77, which acts as the Nucleophile. A glycan (N-linked (GlcNAc...) asparagine) is linked at N115. The active-site Proton acceptor is D215. The DGA/G signature appears at 215–217 (DGG). Residues 321 to 384 (ENALTGTTTE…NRKKLRANKA (64 aa)) adopt a coiled-coil conformation.

It belongs to the patatin family. In terms of tissue distribution, tuber.

The protein localises to the vacuole. Probable lipolytic acyl hydrolase (LAH), an activity which is thought to be involved in the response of tubers to pathogens. This is Patatin-10 from Solanum tuberosum (Potato).